The following is a 503-amino-acid chain: Cytochrome P450 11B1, mitochondrial (503 aa).

The N-terminal 24 residues, 1–24 (MALRAKAEVCMAVPWLSLQRAQAL), are a transit peptide targeting the mitochondrion. Cys-450 serves as a coordination point for heme.

This sequence belongs to the cytochrome P450 family. It depends on heme as a cofactor. Expressed in the zona fasciculata/reticularis of the adrenal cortex.

Its subcellular location is the mitochondrion inner membrane. It catalyses the reaction a steroid + 2 reduced [adrenodoxin] + O2 + 2 H(+) = an 11beta-hydroxysteroid + 2 oxidized [adrenodoxin] + H2O. It carries out the reaction 11-deoxycortisol + 2 reduced [adrenodoxin] + O2 + 2 H(+) = cortisol + 2 oxidized [adrenodoxin] + H2O. The enzyme catalyses 21-hydroxyprogesterone + 2 reduced [adrenodoxin] + O2 + 2 H(+) = corticosterone + 2 oxidized [adrenodoxin] + H2O. The protein operates within steroid biosynthesis; glucocorticoid biosynthesis. It participates in steroid hormone biosynthesis. Functionally, a cytochrome P450 monooxygenase involved in the biosynthesis of adrenal corticoids. Catalyzes a variety of reactions that are essential for many species, including detoxification, defense, and the formation of endogenous chemicals like steroid hormones. Steroid 11beta, 18- and 19-hydroxylase with preferred regioselectivity at 11beta, then 18, and lastly 19. Catalyzes the hydroxylation of 11-deoxycortisol and 11-deoxycorticosterone (21-hydroxyprogesterone) at 11beta position, yielding cortisol or corticosterone, respectively, but cannot produce aldosterone. Mechanistically, uses molecular oxygen inserting one oxygen atom into a substrate for hydroxylation and reducing the second into a water molecule. Two electrons are provided by NADPH via a two-protein mitochondrial transfer system comprising flavoprotein FDXR (adrenodoxin/ferredoxin reductase) and nonheme iron-sulfur protein FDX1 or FDX2 (adrenodoxin/ferredoxin). Due to its lack of 18-oxidation activity, it is incapable of generating aldosterone. Could also be involved in the androgen metabolic pathway. This chain is Cytochrome P450 11B1, mitochondrial, found in Homo sapiens (Human).